Here is a 68-residue protein sequence, read N- to C-terminus: DNA-directed RNA polymerase subunit omega (68 aa).

It belongs to the RNA polymerase subunit omega family. The RNAP catalytic core consists of 2 alpha, 1 beta, 1 beta' and 1 omega subunit. When a sigma factor is associated with the core the holoenzyme is formed, which can initiate transcription.

It catalyses the reaction RNA(n) + a ribonucleoside 5'-triphosphate = RNA(n+1) + diphosphate. Promotes RNA polymerase assembly. Latches the N- and C-terminal regions of the beta' subunit thereby facilitating its interaction with the beta and alpha subunits. The sequence is that of DNA-directed RNA polymerase subunit omega from Listeria monocytogenes serotype 4b (strain CLIP80459).